A 958-amino-acid chain; its full sequence is Atromentin synthetase greA (958 aa).

Positions 60-465 (SIQTKTFSAF…SGRIKDTVIV (406 aa)) are adenylation (A) domain. Positions 597–675 (APSTETEKAL…SLANYVNALL (79 aa)) constitute a Carrier domain. A thiolation and peptide carrier (T) domain region spans residues 602–672 (TEKALAKIYA…VVSSLANYVN (71 aa)). An O-(pantetheine 4'-phosphoryl)serine modification is found at Ser634. The thioesterase (TE) domain stretch occupies residues 698–946 (PIFFVHPGVG…MDFDHVPQFQ (249 aa)).

The protein belongs to the ATP-dependent AMP-binding enzyme family.

It participates in secondary metabolite biosynthesis. Its function is as follows. An L-tyrosine:2-oxoglutarate aminotransferase and atromentin synthetase greA catalyze consecutive steps to turn over L-tyrosine into atromentin, which represents the generic precursor molecule for the entire terphenylquinone and pulvinic acid family of pigments, which are widely distributed secondary metabolites in homobasidiomycetes. The first step catalyzed by the aminotransferase converts L-tyrosine in to 4-hydroxyphenylpyruvate (4-HPP). Adenylation of two 4-HPP monomers by the greA adenylation (A) domain, covalent tethering of the monomers as a thioester and oxoester onto the greA thiolation (T) and thioesterase (TE) domains, respectively, and symmetric C-C-bond formation between two monomers catalyzed by the greA TE domain leads to atromentin. This is Atromentin synthetase greA (greA) from Suillus grevillei (Larch bolete).